The following is a 110-amino-acid chain: Parvalbumin alpha (110 aa).

EF-hand domains are found at residues 39 to 74 and 78 to 110; these read KGPD…FTPN and LSVK…VSES. Ca(2+) is bound by residues D52, D54, S56, F58, E60, E63, D91, D93, D95, K97, and E102.

Belongs to the parvalbumin family.

In muscle, parvalbumin is thought to be involved in relaxation after contraction. It binds two calcium ions. This is Parvalbumin alpha from Aquarana catesbeiana (American bullfrog).